Consider the following 343-residue polypeptide: MSQLLGVAVLGAGHMGADHIRRLDSVVSGARVAAVADPAKERAEEAVAGLDGVLVHTEVAAALDAPGVEAVLIASPGPAHEEALLAAFARGLPVLCEKPMVPDSAGALRIVEAEARLGRRLAQVGFMRRYDAEYMGLKSLLDSGRLGRPLMLHCTHRNVSSPPGFTSAMLINSSVSHEIDAARWLLGQELTAVTVLRPRPSAHAPEGLLDPQFVLFETAGGALVDVEILVNSGFGYQVRCEAVCEAGSVRIGDAHTMVVTSAGGAYQEVAQDYLVRFADAYDREVREWVDATRRGQVTGPSAWDGYAASVVAEAGVRAQDTGDRMTVELAPRPDLYGQNPISR.

Belongs to the Gfo/Idh/MocA family. Homotetramer.

The enzyme catalyses myo-inositol + NAD(+) = scyllo-inosose + NADH + H(+). Involved in the oxidation of myo-inositol (MI) to 2-keto-myo-inositol (2KMI or 2-inosose). The sequence is that of Inositol 2-dehydrogenase from Streptomyces avermitilis (strain ATCC 31267 / DSM 46492 / JCM 5070 / NBRC 14893 / NCIMB 12804 / NRRL 8165 / MA-4680).